The chain runs to 387 residues: Putative purine permease 15 (387 aa).

10 helical membrane-spanning segments follow: residues 44–64 (WVTI…ARLL), 84–104 (TLLQ…HFLI), 122–142 (LAIT…FSDV), 150–169 (VFTL…SKYY), 179–199 (FISL…FSAG), 210–230 (YGII…LCII), 252–272 (FVVV…ILVA), 306–326 (VAWQ…SAVF), 329–349 (VISV…YNTH), and 354–374 (VFRG…IYII).

This sequence belongs to the purine permeases (TC 2.A.7.14) family.

It is found in the membrane. The sequence is that of Putative purine permease 15 (PUP15) from Arabidopsis thaliana (Mouse-ear cress).